Reading from the N-terminus, the 418-residue chain is Thyroid hormone receptor alpha (418 aa).

Positions 1-41 (MDQNLSGLDCLSEPDEKRWPDGKRKRKNSQCMGKSGMSGDS) are disordered. The interval 1 to 60 (MDQNLSGLDCLSEPDEKRWPDGKRKRKNSQCMGKSGMSGDSSVSLLSAGYIPSYLTKDEP) is modulating. Zn(2+) is bound by residues C61, C64, C78, C81, C99, C105, C115, and C118. 2 NR C4-type zinc fingers span residues 61–81 (CVVC…CEGC) and 99–123 (CKYD…FKKC). Positions 61 to 135 (CVVCSDKATG…VGMAMDLVLD (75 aa)) form a DNA-binding region, nuclear receptor. An NR LBD domain is found at 171 to 415 (EEWELIRIVT…PPLFLEVFED (245 aa)). The 3,3',5-triiodo-L-thyronine site is built by R236 and S285.

Belongs to the nuclear hormone receptor family. NR1 subfamily. Highest level of expression in erythrocytes. Also expressed in liver, tail, eye, muscle and skin.

It is found in the nucleus. Nuclear hormone receptor that can act as a repressor or activator of transcription. High affinity receptor for thyroid hormones, including triiodothyronine and thyroxine. The polypeptide is Thyroid hormone receptor alpha (thra) (Aquarana catesbeiana (American bullfrog)).